Consider the following 255-residue polypeptide: Putative F-box protein L126 (255 aa).

The region spanning 1–46 is the F-box domain; the sequence is MLPEEILFMVFSFLDVKELIACSHACSHACSQWRRICSDKLLWVQK.

This is Putative F-box protein L126 from Acanthamoeba polyphaga (Amoeba).